Reading from the N-terminus, the 338-residue chain is Anthranilate phosphoribosyltransferase (338 aa).

5-phospho-alpha-D-ribose 1-diphosphate is bound by residues G78, G81–D82, T86, N88–T91, K106–S114, and S118. G78 serves as a coordination point for anthranilate. Mg(2+) is bound at residue S90. N109 contacts anthranilate. R164 is a binding site for anthranilate. Mg(2+) contacts are provided by D223 and E224.

It belongs to the anthranilate phosphoribosyltransferase family. Homodimer. It depends on Mg(2+) as a cofactor.

It catalyses the reaction N-(5-phospho-beta-D-ribosyl)anthranilate + diphosphate = 5-phospho-alpha-D-ribose 1-diphosphate + anthranilate. It functions in the pathway amino-acid biosynthesis; L-tryptophan biosynthesis; L-tryptophan from chorismate: step 2/5. Catalyzes the transfer of the phosphoribosyl group of 5-phosphorylribose-1-pyrophosphate (PRPP) to anthranilate to yield N-(5'-phosphoribosyl)-anthranilate (PRA). The polypeptide is Anthranilate phosphoribosyltransferase (Bacillus velezensis (strain DSM 23117 / BGSC 10A6 / LMG 26770 / FZB42) (Bacillus amyloliquefaciens subsp. plantarum)).